Reading from the N-terminus, the 499-residue chain is MNMLRCFPECGICGQEYSEDEKLLIPRILTECGHTICTGCAGKIKGQSSIIACPFDRIETRIWKKDVTRLKKNFSILEIKQEVKDRKNRVISEKNEKKERNKNGVCDENTNHHASNYCETCDADLCEECWTWIHSISTLAHHEKKMISTPDCQFHPGKSISLVCMRDRCKKRQNRLMCSECFLDKCSDHFEHEHSSLHLELPELRRNICSSLALYHEKEKKILANIGKLREIIATYSYDGEPFFQKKNELLRFRHFEMGEMDQAIKVLENEVVKRVRVLEYKISNQKLDLDWLQKNKDAIVKLSALPNMKLVQRKWELEVTVKRIEKDSAVRRPEFLADCSTCIVHVLSQRPLQIEMIPAFRLEIRECHRNEVRKFIENHSTRISSRSNILRYNCDFLEIIDRTEDLTIYSEGLRLIMIVDLLDGDRDRYFVALEQLEEAVAYEKIIVGLKSYSRGHGEAASNFLTKLADLHNKMPKITVVVNVDRSEDIEKIVNESII.

The RING-type; degenerate zinc-finger motif lies at Cys10–Arg57. Residues Asn101–Ile147 form a B box-type; degenerate zinc finger.

This is an uncharacterized protein from Caenorhabditis elegans.